Consider the following 93-residue polypeptide: MFKVNEYFDGAVKSIAFQTETLPATVGVMAKGSYEFGTSQKEYMTVVSGSLTVVLPGSDKAETFTQGQTFIVEANQRFNVTADVESSYLCCYE.

The protein belongs to the nucleoside phosphorylase PpnP family.

The catalysed reaction is a purine D-ribonucleoside + phosphate = a purine nucleobase + alpha-D-ribose 1-phosphate. It carries out the reaction adenosine + phosphate = alpha-D-ribose 1-phosphate + adenine. The enzyme catalyses cytidine + phosphate = cytosine + alpha-D-ribose 1-phosphate. It catalyses the reaction guanosine + phosphate = alpha-D-ribose 1-phosphate + guanine. The catalysed reaction is inosine + phosphate = alpha-D-ribose 1-phosphate + hypoxanthine. It carries out the reaction thymidine + phosphate = 2-deoxy-alpha-D-ribose 1-phosphate + thymine. The enzyme catalyses uridine + phosphate = alpha-D-ribose 1-phosphate + uracil. It catalyses the reaction xanthosine + phosphate = alpha-D-ribose 1-phosphate + xanthine. In terms of biological role, catalyzes the phosphorolysis of diverse nucleosides, yielding D-ribose 1-phosphate and the respective free bases. Can use uridine, adenosine, guanosine, cytidine, thymidine, inosine and xanthosine as substrates. Also catalyzes the reverse reactions. This chain is Pyrimidine/purine nucleoside phosphorylase, found in Cellvibrio japonicus (strain Ueda107) (Pseudomonas fluorescens subsp. cellulosa).